The primary structure comprises 23 residues: Laccase-1 (23 aa).

This sequence belongs to the multicopper oxidase family. The cofactor is Cu cation.

It localises to the secreted. It catalyses the reaction 4 hydroquinone + O2 = 4 benzosemiquinone + 2 H2O. Strongly inhibited by sodium azide, sodium cyanide, Li(+), Sn(+), Hg(2+), and the disulfide-reducing agents beta-mercaptoethanol, dithiothreitol and thioglycolic acid. Moderately inhibited by Mn(2+) and Fe(2+), inhibition by these metal ions is stronger at 0.1 mM than at 1 mM. Moderately inhibited by Cu(2+). Functionally, lignin degradation and detoxification of lignin-derived products. Demethylates eucalyptus hard wood lignin. Has high activity against the non-phenolic heterocyclic compound ABTS, and lower activity against the phenolic substrates syringic acid, caffeic acid, syringaldazine, vanillic acid, catechol and levodihydroxyphenylalanine. The polypeptide is Laccase-1 (Galerina sp).